The following is a 263-amino-acid chain: 3-methyl-2-oxobutanoate hydroxymethyltransferase (263 aa).

Residues Asp45 and Asp84 each coordinate Mg(2+). 3-methyl-2-oxobutanoate-binding positions include 45–46, Asp84, and Lys112; that span reads DS. Glu114 serves as a coordination point for Mg(2+). Glu180 acts as the Proton acceptor in catalysis.

Belongs to the PanB family. Homodecamer; pentamer of dimers. Mg(2+) serves as cofactor.

It is found in the cytoplasm. It carries out the reaction 3-methyl-2-oxobutanoate + (6R)-5,10-methylene-5,6,7,8-tetrahydrofolate + H2O = 2-dehydropantoate + (6S)-5,6,7,8-tetrahydrofolate. It functions in the pathway cofactor biosynthesis; (R)-pantothenate biosynthesis; (R)-pantoate from 3-methyl-2-oxobutanoate: step 1/2. Its function is as follows. Catalyzes the reversible reaction in which hydroxymethyl group from 5,10-methylenetetrahydrofolate is transferred onto alpha-ketoisovalerate to form ketopantoate. The chain is 3-methyl-2-oxobutanoate hydroxymethyltransferase from Salmonella paratyphi C (strain RKS4594).